Consider the following 612-residue polypeptide: Alpha-glycerophosphate oxidase (612 aa).

21–49 (DLLIIGGGITGAGVALQAAASGLDTGLIE) lines the FAD pocket. Positions 398–408 (VETSTSEKELD) are enriched in basic and acidic residues. The tract at residues 398-418 (VETSTSEKELDPSAVSRGSSF) is disordered.

The protein belongs to the FAD-dependent glycerol-3-phosphate dehydrogenase family. The cofactor is FAD.

The protein localises to the cytoplasm. The enzyme catalyses sn-glycerol 3-phosphate + O2 = dihydroxyacetone phosphate + H2O2. This chain is Alpha-glycerophosphate oxidase (glpO), found in Streptococcus pyogenes serotype M3 (strain ATCC BAA-595 / MGAS315).